A 430-amino-acid chain; its full sequence is Long-chain specific acyl-CoA dehydrogenase, mitochondrial (430 aa).

The transit peptide at 1-30 (MAARLLLRSLRVLKARSAPRPPPSARCSHS) directs the protein to the mitochondrion. The disordered stretch occupies residues 17 to 39 (SAPRPPPSARCSHSGAEARLETP). Lys-42 bears the N6-acetyllysine mark. Residues Ser-54 and Ser-55 each carry the phosphoserine modification. Residues Lys-66 and Lys-81 each carry the N6-acetyllysine; alternate modification. 2 positions are modified to N6-succinyllysine; alternate: Lys-66 and Lys-81. N6-acetyllysine is present on residues Lys-92 and Lys-95. N6-succinyllysine is present on Lys-165. An FAD-binding site is contributed by 170–179 (IAMTEPGAGS). Ser-179 provides a ligand contact to substrate. Ser-191 is modified (phosphoserine). 203–205 (FIT) contributes to the FAD binding site. 227-228 (AH) contacts substrate. N6-succinyllysine is present on Lys-240. 2 positions are modified to N6-acetyllysine; alternate: Lys-254 and Lys-279. N6-succinyllysine; alternate occurs at positions 254 and 279. Residues Tyr-282 and 289–292 (PQER) contribute to the substrate site. Glu-291 functions as the Proton acceptor in the catalytic mechanism. Arg-317 is a binding site for FAD. Residue Lys-318 is modified to N6-acetyllysine. Position 322 is an N6-acetyllysine; alternate (Lys-322). An N6-succinyllysine; alternate modification is found at Lys-322. Gln-328 contributes to the FAD binding site. Position 358 is an N6-acetyllysine (Lys-358). Residue Ser-362 is modified to Phosphoserine. 385-389 (QLHGG) lines the FAD pocket. A substrate-binding site is contributed by 412-413 (GG). Residue 414–416 (TNE) participates in FAD binding.

It belongs to the acyl-CoA dehydrogenase family. As to quaternary structure, homotetramer. Requires FAD as cofactor. Acetylation at Lys-318 and Lys-322 in proximity of the cofactor-binding sites strongly reduces catalytic activity. These sites are deacetylated by SIRT3. As to expression, expressed in heart, skeletal muscle, kidney, and brain. Expressed in liver (at protein level).

The protein localises to the mitochondrion matrix. It carries out the reaction a long-chain 2,3-saturated fatty acyl-CoA + oxidized [electron-transfer flavoprotein] + H(+) = a long-chain (2E)-enoyl-CoA + reduced [electron-transfer flavoprotein]. The enzyme catalyses oxidized [electron-transfer flavoprotein] + hexadecanoyl-CoA + H(+) = (2E)-hexadecenoyl-CoA + reduced [electron-transfer flavoprotein]. It catalyses the reaction hexanoyl-CoA + oxidized [electron-transfer flavoprotein] + H(+) = (2E)-hexenoyl-CoA + reduced [electron-transfer flavoprotein]. The catalysed reaction is octanoyl-CoA + oxidized [electron-transfer flavoprotein] + H(+) = (2E)-octenoyl-CoA + reduced [electron-transfer flavoprotein]. It carries out the reaction decanoyl-CoA + oxidized [electron-transfer flavoprotein] + H(+) = (2E)-decenoyl-CoA + reduced [electron-transfer flavoprotein]. The enzyme catalyses dodecanoyl-CoA + oxidized [electron-transfer flavoprotein] + H(+) = (2E)-dodecenoyl-CoA + reduced [electron-transfer flavoprotein]. It catalyses the reaction tetradecanoyl-CoA + oxidized [electron-transfer flavoprotein] + H(+) = (2E)-tetradecenoyl-CoA + reduced [electron-transfer flavoprotein]. The catalysed reaction is octadecanoyl-CoA + oxidized [electron-transfer flavoprotein] + H(+) = (2E)-octadecenoyl-CoA + reduced [electron-transfer flavoprotein]. It carries out the reaction eicosanoyl-CoA + oxidized [electron-transfer flavoprotein] + H(+) = (2E)-eicosenoyl-CoA + reduced [electron-transfer flavoprotein]. The enzyme catalyses docosanoyl-CoA + oxidized [electron-transfer flavoprotein] + H(+) = (2E)-docosenoyl-CoA + reduced [electron-transfer flavoprotein]. It catalyses the reaction tetracosanoyl-CoA + oxidized [electron-transfer flavoprotein] + H(+) = (2E)-tetracosenoyl-CoA + reduced [electron-transfer flavoprotein]. The catalysed reaction is (5E)-tetradecenoyl-CoA + oxidized [electron-transfer flavoprotein] + H(+) = (2E,5E)-tetradecadienoyl-CoA + reduced [electron-transfer flavoprotein]. It carries out the reaction (5Z)-tetradecenoyl-CoA + oxidized [electron-transfer flavoprotein] + H(+) = (2E,5Z)-tetradecadienoyl-CoA + reduced [electron-transfer flavoprotein]. The enzyme catalyses oxidized [electron-transfer flavoprotein] + (9Z)-octadecenoyl-CoA + H(+) = (2E,9Z)-octadecadienoyl-CoA + reduced [electron-transfer flavoprotein]. The protein operates within lipid metabolism; mitochondrial fatty acid beta-oxidation. In terms of biological role, long-chain specific acyl-CoA dehydrogenase is one of the acyl-CoA dehydrogenases that catalyze the first step of mitochondrial fatty acid beta-oxidation, an aerobic process breaking down fatty acids into acetyl-CoA and allowing the production of energy from fats. The first step of fatty acid beta-oxidation consists in the removal of one hydrogen from C-2 and C-3 of the straight-chain fatty acyl-CoA thioester, resulting in the formation of trans-2-enoyl-CoA. Among the different mitochondrial acyl-CoA dehydrogenases, long-chain specific acyl-CoA dehydrogenase can act on saturated and unsaturated acyl-CoAs with 6 to 24 carbons with a preference for 8 to 18 carbons long primary chains. The chain is Long-chain specific acyl-CoA dehydrogenase, mitochondrial from Mus musculus (Mouse).